We begin with the raw amino-acid sequence, 178 residues long: Large ribosomal subunit protein uL6 (178 aa).

This sequence belongs to the universal ribosomal protein uL6 family. As to quaternary structure, part of the 50S ribosomal subunit.

This protein binds to the 23S rRNA, and is important in its secondary structure. It is located near the subunit interface in the base of the L7/L12 stalk, and near the tRNA binding site of the peptidyltransferase center. This Francisella tularensis subsp. mediasiatica (strain FSC147) protein is Large ribosomal subunit protein uL6.